The sequence spans 72 residues: Putative beta-neurotoxin (72 aa).

The first 7 residues, 1–7 (IDMVVEC), serve as a signal peptide directing secretion. The LCN-type CS-alpha/beta domain maps to 9–71 (KDGYLMEHDG…TWSRATNRCG (63 aa)). Disulfide bonds link C19–C70, C23–C45, C31–C51, and C35–C53.

Expressed by the venom gland.

Its subcellular location is the secreted. Beta toxins bind voltage-independently at site-4 of sodium channels (Nav) and shift the voltage of activation toward more negative potentials thereby affecting sodium channel activation and promoting spontaneous and repetitive firing. This is Putative beta-neurotoxin from Tityus pachyurus (Colombian scorpion).